Consider the following 244-residue polypeptide: Tabinhibitin 8 (244 aa).

The signal sequence occupies residues 1 to 23 (MTSILVSRFKISALTLQYATSDS). Residues 67 to 194 (YTGGGIIVLR…KTPLFFSSNC (128 aa)) form the SCP domain. Positions 143–145 (RGD) match the Cell attachment site motif.

This sequence belongs to the CRISP family. As to expression, expressed in salivary glands.

Its subcellular location is the secreted. Functionally, inhibits platelet aggregation induced by all agonists tested (ADP, arachidonic acid, the thromboxane A2 analog U46619, thrombin, and snake venom snaclecs (TMVA that activates platelet through GPIB, and stejnulxin that specifically acts through GPVI (GP6))). May act by competing with fibrinogen for binding to glycoprotein IIb/IIIa (ITGA2B/ITGB3). This is Tabinhibitin 8 from Tabanus yao (Horsefly).